A 785-amino-acid chain; its full sequence is Cation/H(+) antiporter 1 (785 aa).

Transmembrane regions (helical) follow at residues 19–39 (LNTMFIQMACILVFSQFFYLF), 44–64 (GQAGPVAQILAGIVLSLLTII), 79–99 (YYIFFSFLLRTAFVFLIGLEI), 112–132 (IVITLGSLVISGIIWLPFLWF), 143–163 (FLTFYLAFLITLSNTAAPVVI), 179–199 (LAISCGLFIEITNIFIYTIVL), 201–221 (FISGTMTADIFIYSFATGVII), 240–260 (YLSKAETLAFIILILIIALTI), 294–314 (YPIHEFVLPVYFGYIGFRFSV), 323–343 (LVLGMTVALSLLGKLLGVLFA), 352–372 (QYWLFLSTMLSVKGHIGLVLL), and 389–409 (MFVAALVIMTLLSGVITSLLL).

Belongs to the monovalent cation:proton antiporter 2 (CPA2) transporter (TC 2.A.37) family. CHX (TC 2.A.37.4) subfamily. As to expression, specifically expressed in pollen.

The protein localises to the membrane. In terms of biological role, may operate as a cation/H(+) antiporter. The protein is Cation/H(+) antiporter 1 (CHX1) of Arabidopsis thaliana (Mouse-ear cress).